The following is a 294-amino-acid chain: Large ribosomal subunit protein uL4m (294 aa).

The disordered stretch occupies residues 119 to 139 (EVSGGGRKPWQQKGSGRARHG). Arginine 147 carries the post-translational modification Omega-N-methylarginine.

This sequence belongs to the universal ribosomal protein uL4 family. In terms of assembly, component of the mitochondrial ribosome large subunit (39S) which comprises a 16S rRNA and about 50 distinct proteins. Interacts with MIEF1 upstream open reading frame protein.

The protein localises to the mitochondrion. The chain is Large ribosomal subunit protein uL4m (Mrpl4) from Mus musculus (Mouse).